The primary structure comprises 346 residues: F(420)H(2) dehydrogenase subunit F (346 aa).

4Fe-4S ferredoxin-type domains lie at 5 to 34 (IAEVIQHDVCAACGACEAVCPIGAVTVKKA) and 46 to 76 (YEKGAAFQVCEGCLTCSRICPVVDGFIENEL). The [4Fe-4S] cluster site is built by cysteine 14, cysteine 17, cysteine 20, cysteine 24, cysteine 55, cysteine 58, cysteine 61, and cysteine 65.

The FPO complex is composed of at least 13 different subunits. The cofactor is [4Fe-4S] cluster. FAD serves as cofactor.

The protein localises to the membrane. It is found in the cytoplasm. The catalysed reaction is methanophenazine + reduced coenzyme F420-(gamma-L-Glu)(n) = dihydromethanophenazine + oxidized coenzyme F420-(gamma-L-Glu)(n) + H(+). It carries out the reaction reduced coenzyme F420-(gamma-L-Glu)(n) + 2 oxidized [2Fe-2S]-[ferredoxin] = oxidized coenzyme F420-(gamma-L-Glu)(n) + 2 reduced [2Fe-2S]-[ferredoxin] + 3 H(+). Functionally, component of the F(420)H(2) dehydrogenase (FPO complex) which is part of the energy-conserving F(420)H(2):heterodisulfide oxidoreductase system. The membrane-bound electron transfer system of the complex plays an important role in the metabolism of methylotrophic methanogens when the organisms grow on methanol or methylamines. Catalyzes the oxidation of methanophenazine to dihydromethanophenazine. It shuttles electrons from F(420)H(2), via FAD and iron-sulfur (Fe-S) centers, to methanophenazine (an electron carrier in the membrane). It couples the redox reaction to proton translocation (for every two electrons transferred, two hydrogen ions are translocated across the cytoplasmic membrane), and thus conserves the redox energy in a proton gradient. It also catalyzes the oxidation of F(420)H(2) with quinones such as 2,3-dimethyl-1,4-naphthoquinone, 2-methyl-1,4-naphthoquinone and tetramethyl-p-benzoquinone. Might have a dual function, acting as an electron input module when connected to the membrane integral Fpo complex, or as a soluble single subunit, being involved in the reoxydation of reduced ferredoxin in the cytoplasm. The polypeptide is F(420)H(2) dehydrogenase subunit F (fpoF) (Methanosarcina mazei (strain ATCC BAA-159 / DSM 3647 / Goe1 / Go1 / JCM 11833 / OCM 88) (Methanosarcina frisia)).